Here is a 1070-residue protein sequence, read N- to C-terminus: DNA-directed RNA polymerase subunit beta (1070 aa).

It belongs to the RNA polymerase beta chain family. In plastids the minimal PEP RNA polymerase catalytic core is composed of four subunits: alpha, beta, beta', and beta''. When a (nuclear-encoded) sigma factor is associated with the core the holoenzyme is formed, which can initiate transcription.

The protein resides in the plastid. It localises to the chloroplast. The catalysed reaction is RNA(n) + a ribonucleoside 5'-triphosphate = RNA(n+1) + diphosphate. Functionally, DNA-dependent RNA polymerase catalyzes the transcription of DNA into RNA using the four ribonucleoside triphosphates as substrates. The sequence is that of DNA-directed RNA polymerase subunit beta from Angiopteris evecta (Mule's foot fern).